Consider the following 323-residue polypeptide: o-succinylbenzoate synthase (323 aa).

The active-site Proton donor is Lys-134. Mg(2+)-binding residues include Asp-162, Glu-191, and Asp-214. Catalysis depends on Lys-236, which acts as the Proton acceptor.

Belongs to the mandelate racemase/muconate lactonizing enzyme family. MenC type 1 subfamily. Requires a divalent metal cation as cofactor.

It carries out the reaction (1R,6R)-6-hydroxy-2-succinyl-cyclohexa-2,4-diene-1-carboxylate = 2-succinylbenzoate + H2O. It participates in quinol/quinone metabolism; 1,4-dihydroxy-2-naphthoate biosynthesis; 1,4-dihydroxy-2-naphthoate from chorismate: step 4/7. The protein operates within quinol/quinone metabolism; menaquinone biosynthesis. Its function is as follows. Converts 2-succinyl-6-hydroxy-2,4-cyclohexadiene-1-carboxylate (SHCHC) to 2-succinylbenzoate (OSB). The polypeptide is o-succinylbenzoate synthase (Yersinia pestis bv. Antiqua (strain Antiqua)).